The primary structure comprises 197 residues: uncharacterized protein (197 aa).

The chain crosses the membrane as a helical span at residues 103 to 123 (LAIVLPVLANLIMCAMLAWYL).

The protein localises to the host membrane. This is an uncharacterized protein from Equus caballus (Horse).